A 1601-amino-acid polypeptide reads, in one-letter code: Rap guanine nucleotide exchange factor 6 (1601 aa).

Met1 carries the post-translational modification N-acetylmethionine. 2 disordered regions span residues 1–22 and 179–250; these read MNSP…ERTP and PHPQ…QGRD. Ser3 bears the Phosphoserine mark. Residues 187–205 are compositionally biased toward low complexity; the sequence is SSSQSGCSIASDSGSSSLS. The span at 228–241 shows a compositional bias: acidic residues; the sequence is VDSEDDEEEDEEID. Residue 280–399 coordinates a nucleoside 3',5'-cyclic phosphate; it reads AFANMTMSVR…VEEEGEIVMV (120 aa). An N-terminal Ras-GEF domain is found at 412–526; it reads KGHIVIKATP…LLNIACAAKA (115 aa). Residues 530–615 enclose the PDZ domain; that stretch reads QVVLQKASRE…LTVKTNIFVF (86 aa). The Ras-associating domain maps to 749 to 835; that stretch reads PDQVIRVFKV…GRYYLKNNME (87 aa). A Ras-GEF domain is found at 860 to 1088; the sequence is STIEVATQLS…LDVQGGAHKK (229 aa). 4 disordered regions span residues 1192–1274, 1302–1324, 1455–1478, and 1571–1601; these read IRKK…SRSS, ESTG…QHGP, LEST…VYKT, and QRHN…VSAV. 2 stretches are compositionally biased toward low complexity: residues 1229–1238 and 1255–1274; these read SVASSLHSSP and SAKS…SRSS. Acidic residues predominate over residues 1586–1601; that stretch reads TDADSEADENEQVSAV.

Interacts with the second PDZ domain of human PTP1e. Isoform 3 has highest expression levels in the brain, heart, liver, lung and placenta and is barely detectable in skeletal muscle, kidney and pancreas.

Its subcellular location is the cytoplasm. It is found in the cell membrane. Guanine nucleotide exchange factor (GEF) for Rap1A, Rap2A and M-Ras GTPases. Does not interact with cAMP. The polypeptide is Rap guanine nucleotide exchange factor 6 (RAPGEF6) (Homo sapiens (Human)).